We begin with the raw amino-acid sequence, 361 residues long: Alcohol dehydrogenase 9 (361 aa).

Residues Cys51, Thr53, His73, Cys104, Cys107, Cys110, Cys118, and Cys167 each coordinate Zn(2+). Residues Thr53 and His73 each coordinate an alcohol. Position 53 (Thr53) interacts with NAD(+). NAD(+) contacts are provided by residues Gly192 to Gly197, Lys221, Leu278 to Ala280, and Lys356.

The protein belongs to the zinc-containing alcohol dehydrogenase family. Class-III subfamily. In terms of assembly, homodimer. It depends on Zn(2+) as a cofactor.

The protein is Alcohol dehydrogenase 9 of Catharanthus roseus (Madagascar periwinkle).